The chain runs to 106 residues: Urease subunit beta (106 aa).

It belongs to the urease beta subunit family. Heterotrimer of UreA (gamma), UreB (beta) and UreC (alpha) subunits. Three heterotrimers associate to form the active enzyme.

It is found in the cytoplasm. It carries out the reaction urea + 2 H2O + H(+) = hydrogencarbonate + 2 NH4(+). Its pathway is nitrogen metabolism; urea degradation; CO(2) and NH(3) from urea (urease route): step 1/1. In Prochlorococcus marinus (strain NATL1A), this protein is Urease subunit beta.